Consider the following 297-residue polypeptide: Probable lipid kinase YegS-like (297 aa).

A DAGKc domain is found at 2–131 (STFPASLLIL…IDIARVNDKT (130 aa)). ATP is bound by residues Thr-40, 66–72 (GDGTINE), and Thr-93. 3 residues coordinate Mg(2+): Leu-213, Asp-216, and Leu-218. Catalysis depends on Glu-269, which acts as the Proton acceptor.

It belongs to the diacylglycerol/lipid kinase family. YegS lipid kinase subfamily. It depends on Mg(2+) as a cofactor. The cofactor is Ca(2+).

The protein localises to the cytoplasm. In terms of biological role, probably phosphorylates lipids; the in vivo substrate is unknown. This Klebsiella pneumoniae (strain 342) protein is Probable lipid kinase YegS-like.